We begin with the raw amino-acid sequence, 1374 residues long: DNA-directed RNA polymerase subunit beta (1374 aa).

It belongs to the RNA polymerase beta chain family. The RNAP catalytic core consists of 2 alpha, 1 beta, 1 beta' and 1 omega subunit. When a sigma factor is associated with the core the holoenzyme is formed, which can initiate transcription.

The enzyme catalyses RNA(n) + a ribonucleoside 5'-triphosphate = RNA(n+1) + diphosphate. In terms of biological role, DNA-dependent RNA polymerase catalyzes the transcription of DNA into RNA using the four ribonucleoside triphosphates as substrates. This chain is DNA-directed RNA polymerase subunit beta, found in Rickettsia prowazekii (strain Madrid E).